Reading from the N-terminus, the 478-residue chain is Cell division protein FtsZ homolog 2-1, chloroplastic (478 aa).

A disordered region spans residues 86-112 (EGTSTIVNPRKETSSGPVVEDFEEPSA). 128–132 (GGGSN) serves as a coordination point for GTP. The residue at position 143 (S143) is a Phosphoserine; by PGK1. GTP-binding positions include 217 to 219 (GTG), E248, and R252. T286 carries the post-translational modification Phosphothreonine; by PGK1. D296 serves as a coordination point for GTP.

Belongs to the FtsZ family. As to quaternary structure, aggregates to form a contractile ring-like structure; contraction of the ring was accompanied by an increase in the filament turnover rate. Self-interacts and binds to FTSZ1 in heteromers to form two morphologically distinct types of filaments, termed type-I (smooth filaments) and -II (rough filaments), in a GTP-dependent manner; the GDP-induced disassembly is inhibited by ARC6. Interacts (via C-terminus) with ARC6; this interaction enables ARC3 binding to FTSZ2. Part of a complex made of ARC3, ARC6, FTSZ1 and FTSZ2. Binds to MCD1 in an ARC6-dependent manner. Binds to CDP1/PARC6. Part of a complex made of CDP1/PARC6, ARC3 and FtsZ proteins in the middle of the plastid; this complex enhances the dynamics of Z rings during chloroplast division. Binds to PGK1. In terms of processing, filaments containing FTSZ2-1 are stabilized when in complex with GTP but destabilized after conversion of GTP into GDP; ARC6 conteracts this destabilisation by preventing the dissociation of GDP-bound FTSZ2 molecules thus inhibiting filament disassembly whereas ARC3 promotes GTPase activity thus accelerating the conversion of GTP into GDP and triggering FtsZ2 filaments disassembly. Phosphorylation at Ser-143 is necessary for interactions with ARC3, ARC6, FTSZ1 and FTSZ2-2. Phosphorylations at Ser-143 and Thr-286 are required for the formation of contractile ring at the chloroplast midpoint.

It is found in the plastid. It localises to the chloroplast stroma. The protein resides in the chloroplast thylakoid membrane. GTPase activity is enhanced by ARC3. Functionally, exhibits GTPase activity which converts GTP ligands to GDP. Component of the plastid division machinery consisting in a binary fission accomplished by the simultaneous constriction of the FtsZ ring on the stromal side of the inner envelope membrane, and the ARC5 ring on the cytosolic side of the outer envelope membrane. Required for plastid division in a dose-dependent manner. In the vegetative shoot apex, at the shoot apical meristem (SAM), where the proplastid-to-chloroplast transition takes place, major contributor of plastid division in the L1 and L3 layers and contributes equally with FTSZ1 in the L2 layer. This Arabidopsis thaliana (Mouse-ear cress) protein is Cell division protein FtsZ homolog 2-1, chloroplastic.